The following is a 498-amino-acid chain: ATP synthase subunit beta, chloroplastic (498 aa).

Glycine 172–threonine 179 is an ATP binding site.

The protein belongs to the ATPase alpha/beta chains family. F-type ATPases have 2 components, CF(1) - the catalytic core - and CF(0) - the membrane proton channel. CF(1) has five subunits: alpha(3), beta(3), gamma(1), delta(1), epsilon(1). CF(0) has four main subunits: a(1), b(1), b'(1) and c(9-12).

The protein resides in the plastid. It localises to the chloroplast thylakoid membrane. The enzyme catalyses ATP + H2O + 4 H(+)(in) = ADP + phosphate + 5 H(+)(out). Produces ATP from ADP in the presence of a proton gradient across the membrane. The catalytic sites are hosted primarily by the beta subunits. This Whiteheadia bifolia (Elephants ears) protein is ATP synthase subunit beta, chloroplastic.